We begin with the raw amino-acid sequence, 262 residues long: Diaminopimelate epimerase (262 aa).

Substrate is bound by residues N17, Q45, and N63. C72 acts as the Proton donor in catalysis. Substrate is bound by residues 73 to 74, N154, N187, and 205 to 206; these read GN and ER. Residue C214 is the Proton acceptor of the active site. 215-216 serves as a coordination point for substrate; that stretch reads GS.

This sequence belongs to the diaminopimelate epimerase family. As to quaternary structure, homodimer.

It is found in the cytoplasm. It catalyses the reaction (2S,6S)-2,6-diaminopimelate = meso-2,6-diaminopimelate. It functions in the pathway amino-acid biosynthesis; L-lysine biosynthesis via DAP pathway; DL-2,6-diaminopimelate from LL-2,6-diaminopimelate: step 1/1. In terms of biological role, catalyzes the stereoinversion of LL-2,6-diaminopimelate (L,L-DAP) to meso-diaminopimelate (meso-DAP), a precursor of L-lysine and an essential component of the bacterial peptidoglycan. This is Diaminopimelate epimerase from Wolbachia sp. subsp. Drosophila simulans (strain wRi).